The following is a 626-amino-acid chain: Receptor-like protein 4 (626 aa).

The N-terminal stretch at 1–22 (MMLRFILASLLLSSFSLYSSLA) is a signal peptide. Over 23–549 (RPAPYALRIS…CGPHLSSGAK (527 aa)) the chain is Extracellular. Asparagine 61, asparagine 282, asparagine 333, and asparagine 417 each carry an N-linked (GlcNAc...) asparagine glycan. LRR repeat units follow at residues 420-444 (RWFI…ISKL), 445-468 (KHLQ…LGSV), 470-492 (SLEV…LGEL), and 493-516 (TSLR…VGGR). Residues asparagine 451 and asparagine 482 are each glycosylated (N-linked (GlcNAc...) asparagine). Asparagine 524 carries an N-linked (GlcNAc...) asparagine glycan. The helical transmembrane segment at 550 to 570 (IGIAFGVSLAFLLIVACAMIW) threads the bilayer. Topologically, residues 571–626 (WKRRQNILRAQQIAARGAPYAKKRTHVSHDIQMSRHGHNNHGQARTAVENGPSLLS) are cytoplasmic. Residues 603–626 (MSRHGHNNHGQARTAVENGPSLLS) are disordered.

It belongs to the RLP family.

It localises to the cell membrane. In Arabidopsis thaliana (Mouse-ear cress), this protein is Receptor-like protein 4.